The sequence spans 80 residues: Small ribosomal subunit protein bS16 (80 aa).

Belongs to the bacterial ribosomal protein bS16 family.

This is Small ribosomal subunit protein bS16 from Wigglesworthia glossinidia brevipalpis.